Reading from the N-terminus, the 100-residue chain is NADH-quinone oxidoreductase subunit K (100 aa).

Transmembrane regions (helical) follow at residues 4-24 (LQHG…GLVI), 28-48 (LLFM…AFVV), and 60-80 (VMYI…LALL).

It belongs to the complex I subunit 4L family. In terms of assembly, NDH-1 is composed of 13 different subunits. Subunits NuoA, H, J, K, L, M, N constitute the membrane sector of the complex.

It localises to the cell inner membrane. The catalysed reaction is a quinone + NADH + 5 H(+)(in) = a quinol + NAD(+) + 4 H(+)(out). In terms of biological role, NDH-1 shuttles electrons from NADH, via FMN and iron-sulfur (Fe-S) centers, to quinones in the respiratory chain. The immediate electron acceptor for the enzyme in this species is believed to be ubiquinone. Couples the redox reaction to proton translocation (for every two electrons transferred, four hydrogen ions are translocated across the cytoplasmic membrane), and thus conserves the redox energy in a proton gradient. This chain is NADH-quinone oxidoreductase subunit K, found in Musicola paradisiaca (strain Ech703) (Dickeya paradisiaca).